The following is a 299-amino-acid chain: Protein PRY1 (299 aa).

The signal sequence occupies residues Met-1–Ala-19. Residues Thr-103 to Ser-157 form a disordered region. Residues Leu-167–Tyr-281 enclose the SCP domain.

The protein belongs to the CRISP family. O-glycosylated.

It localises to the secreted. In terms of biological role, secreted protein required for efficient export of lipids such as acetylated sterols. Acts in detoxification of hydrophobic compounds. The protein is Protein PRY1 of Saccharomyces cerevisiae (strain ATCC 204508 / S288c) (Baker's yeast).